A 964-amino-acid chain; its full sequence is Probable outer membrane protein PmpE (964 aa).

The N-terminal stretch at 1-18 (MKKAFFFFLIGNSLSGLA) is a signal peptide. An Autotransporter domain is found at 683–964 (LTPSGHPFWG…YLNGEIALRF (282 aa)).

This sequence belongs to the PMP outer membrane protein family.

Its subcellular location is the secreted. It is found in the cell wall. The protein resides in the cell outer membrane. In Chlamydia trachomatis serovar D (strain ATCC VR-885 / DSM 19411 / UW-3/Cx), this protein is Probable outer membrane protein PmpE (pmpE).